The chain runs to 166 residues: MQFMFAALKLELGDTLYYLLIFAALLLLVKHFAWGPVTKMMEKRRQKVISDLDQAESDRKKAALLANQREAALKDSKQEATQILSTAKRNAEKTKSSIISQADQEAAAIRERASKDAAQAKTDALNEARDQVADISVAIAEKVISKSLSAADQKDLVDQFIKGLND.

Residues 15-37 traverse the membrane as a helical segment; the sequence is TLYYLLIFAALLLLVKHFAWGPV.

It belongs to the ATPase B chain family. In terms of assembly, F-type ATPases have 2 components, F(1) - the catalytic core - and F(0) - the membrane proton channel. F(1) has five subunits: alpha(3), beta(3), gamma(1), delta(1), epsilon(1). F(0) has three main subunits: a(1), b(2) and c(10-14). The alpha and beta chains form an alternating ring which encloses part of the gamma chain. F(1) is attached to F(0) by a central stalk formed by the gamma and epsilon chains, while a peripheral stalk is formed by the delta and b chains.

The protein resides in the cell membrane. Functionally, f(1)F(0) ATP synthase produces ATP from ADP in the presence of a proton or sodium gradient. F-type ATPases consist of two structural domains, F(1) containing the extramembraneous catalytic core and F(0) containing the membrane proton channel, linked together by a central stalk and a peripheral stalk. During catalysis, ATP synthesis in the catalytic domain of F(1) is coupled via a rotary mechanism of the central stalk subunits to proton translocation. In terms of biological role, component of the F(0) channel, it forms part of the peripheral stalk, linking F(1) to F(0). This Lactobacillus gasseri (strain ATCC 33323 / DSM 20243 / BCRC 14619 / CIP 102991 / JCM 1131 / KCTC 3163 / NCIMB 11718 / NCTC 13722 / AM63) protein is ATP synthase subunit b.